Reading from the N-terminus, the 107-residue chain is Integration host factor subunit beta (107 aa).

A disordered region spans residues 87–107 (RERVNNGTRKNGGSADAASGG).

This sequence belongs to the bacterial histone-like protein family. Heterodimer of an alpha and a beta chain.

This protein is one of the two subunits of integration host factor, a specific DNA-binding protein that functions in genetic recombination as well as in transcriptional and translational control. The protein is Integration host factor subunit beta of Granulibacter bethesdensis (strain ATCC BAA-1260 / CGDNIH1).